We begin with the raw amino-acid sequence, 98 residues long: NADH-ubiquinone oxidoreductase chain 4L (98 aa).

Transmembrane regions (helical) follow at residues 1 to 21 (MIPT…GMLT), 27 to 47 (VASL…ATLI), and 61 to 81 (IILL…LISI).

This sequence belongs to the complex I subunit 4L family. Core subunit of respiratory chain NADH dehydrogenase (Complex I) which is composed of 45 different subunits.

It localises to the mitochondrion inner membrane. It catalyses the reaction a ubiquinone + NADH + 5 H(+)(in) = a ubiquinol + NAD(+) + 4 H(+)(out). In terms of biological role, core subunit of the mitochondrial membrane respiratory chain NADH dehydrogenase (Complex I) which catalyzes electron transfer from NADH through the respiratory chain, using ubiquinone as an electron acceptor. Part of the enzyme membrane arm which is embedded in the lipid bilayer and involved in proton translocation. This chain is NADH-ubiquinone oxidoreductase chain 4L (MT-ND4L), found in Macaca hecki (Heck's macaque).